A 57-amino-acid polypeptide reads, in one-letter code: U-Asilidin(1)-Mar2a (57 aa).

The signal sequence occupies residues 1–24 (MAPLLKLNILLLIVLICFTFHANA). Cystine bridges form between C28-C44, C35-C48, and C43-C53.

It belongs to the asilidin-1 family. Expressed by the venom gland. Exclusively expressed in the venom thoracic glands (and not in body tissues).

It localises to the secreted. May act as a neurotoxin. In Machimus arthriticus (Breck robberfly), this protein is U-Asilidin(1)-Mar2a.